The sequence spans 272 residues: Flt3 receptor-interacting lectin (272 aa).

An N-terminal signal peptide occupies residues 1-8; the sequence is MFPSKVKS. D94 and G112 together coordinate alpha-D-mannopyranose. N-linked (GlcNAc...) asparagine glycans are attached at residues N125 and N131. Residues N152 and 237 to 238 each bind alpha-D-mannopyranose; that span reads QD.

It belongs to the leguminous lectin family. As to quaternary structure, dimer (alpha/beta)2. Tetramer (alpha/beta)4. In terms of processing, glycosylated at Asn-125 by either a paucimannose type N-glycan (alpha-4) or a single N-acetylglucosamine (alpha-3). Glycosylated at Asn-131 by a paucimannose type N-glycan (alpha-2, alpha-3 and alpha-4). In alpha-2, Asn-125 is deamidated to an Asp, possibly due to the action of intrinsic peptide N-glycosidase (PGNase).

The protein resides in the protein storage vacuole lumen. Its function is as follows. Mannose-binding lectin. Accommodates most effectively a non-reducing terminal alpha-d-mannosyl unit. Strongly precipitates murine IgM but not IgG. The polypeptide is Flt3 receptor-interacting lectin (Lablab purpureus (Hyacinth bean)).